A 465-amino-acid polypeptide reads, in one-letter code: Siroheme synthase (465 aa).

Positions 1–203 (MEYLPLFHNL…GRTAEAERLL (203 aa)) are precorrin-2 dehydrogenase /sirohydrochlorin ferrochelatase. Residues 22–23 (EI) and 43–44 (PS) each bind NAD(+). S128 is modified (phosphoserine). The segment at 216-465 (GEVYLVGAGP…WFEGAQAAGR (250 aa)) is uroporphyrinogen-III C-methyltransferase. P225 contributes to the S-adenosyl-L-methionine binding site. The active-site Proton acceptor is D248. K270 functions as the Proton donor in the catalytic mechanism. S-adenosyl-L-methionine is bound by residues 301-303 (GGD), I306, 331-332 (TA), M383, and G412.

It in the N-terminal section; belongs to the precorrin-2 dehydrogenase / sirohydrochlorin ferrochelatase family. In the C-terminal section; belongs to the precorrin methyltransferase family.

The enzyme catalyses uroporphyrinogen III + 2 S-adenosyl-L-methionine = precorrin-2 + 2 S-adenosyl-L-homocysteine + H(+). The catalysed reaction is precorrin-2 + NAD(+) = sirohydrochlorin + NADH + 2 H(+). It catalyses the reaction siroheme + 2 H(+) = sirohydrochlorin + Fe(2+). Its pathway is cofactor biosynthesis; adenosylcobalamin biosynthesis; precorrin-2 from uroporphyrinogen III: step 1/1. The protein operates within cofactor biosynthesis; adenosylcobalamin biosynthesis; sirohydrochlorin from precorrin-2: step 1/1. It participates in porphyrin-containing compound metabolism; siroheme biosynthesis; precorrin-2 from uroporphyrinogen III: step 1/1. It functions in the pathway porphyrin-containing compound metabolism; siroheme biosynthesis; siroheme from sirohydrochlorin: step 1/1. Its pathway is porphyrin-containing compound metabolism; siroheme biosynthesis; sirohydrochlorin from precorrin-2: step 1/1. Functionally, multifunctional enzyme that catalyzes the SAM-dependent methylations of uroporphyrinogen III at position C-2 and C-7 to form precorrin-2 via precorrin-1. Then it catalyzes the NAD-dependent ring dehydrogenation of precorrin-2 to yield sirohydrochlorin. Finally, it catalyzes the ferrochelation of sirohydrochlorin to yield siroheme. The chain is Siroheme synthase from Stutzerimonas stutzeri (strain A1501) (Pseudomonas stutzeri).